The chain runs to 795 residues: Phenylalanine--tRNA ligase beta subunit (795 aa).

The region spanning 39–148 (ADEFHTVVVG…ADAPVGEDYR (110 aa)) is the tRNA-binding domain. The B5 domain maps to 401–476 (PKRDGITLRA…RVYGYNSIQA (76 aa)). 4 residues coordinate Mg(2+): Asp454, Asp460, Glu463, and Glu464. Residues 701-794 (SRYPSIRRDL…LKSEFNATLR (94 aa)) form the FDX-ACB domain.

This sequence belongs to the phenylalanyl-tRNA synthetase beta subunit family. Type 1 subfamily. In terms of assembly, tetramer of two alpha and two beta subunits. Requires Mg(2+) as cofactor.

It localises to the cytoplasm. The enzyme catalyses tRNA(Phe) + L-phenylalanine + ATP = L-phenylalanyl-tRNA(Phe) + AMP + diphosphate + H(+). This Idiomarina loihiensis (strain ATCC BAA-735 / DSM 15497 / L2-TR) protein is Phenylalanine--tRNA ligase beta subunit.